A 319-amino-acid polypeptide reads, in one-letter code: ATP-dependent 6-phosphofructokinase (319 aa).

ATP contacts are provided by residues glycine 11, 72–73 (RS), and 102–105 (GDGS). Residue aspartate 103 coordinates Mg(2+). 126–128 (TID) is a binding site for substrate. Aspartate 128 serves as the catalytic Proton acceptor. Arginine 155 is an ADP binding site. Residues arginine 163 and 170–172 (MGR) each bind substrate. 186–188 (GAE) contacts ADP. Substrate contacts are provided by residues glutamate 223, arginine 245, and 251 to 254 (HTQR).

It belongs to the phosphofructokinase type A (PFKA) family. ATP-dependent PFK group I subfamily. Prokaryotic clade 'B1' sub-subfamily. Homotetramer. Mg(2+) is required as a cofactor.

It localises to the cytoplasm. It carries out the reaction beta-D-fructose 6-phosphate + ATP = beta-D-fructose 1,6-bisphosphate + ADP + H(+). It participates in carbohydrate degradation; glycolysis; D-glyceraldehyde 3-phosphate and glycerone phosphate from D-glucose: step 3/4. With respect to regulation, allosterically activated by ADP and other diphosphonucleosides, and allosterically inhibited by phosphoenolpyruvate. Catalyzes the phosphorylation of D-fructose 6-phosphate to fructose 1,6-bisphosphate by ATP, the first committing step of glycolysis. The polypeptide is ATP-dependent 6-phosphofructokinase (Sulfurimonas denitrificans (strain ATCC 33889 / DSM 1251) (Thiomicrospira denitrificans (strain ATCC 33889 / DSM 1251))).